A 217-amino-acid chain; its full sequence is Casparian strip membrane protein 6 (217 aa).

Over 1–57 (MEEAKHIEAVEAKQIEAEEAQRIKAGEAKQIEAGETSRSSRKVITFEPKLVINKGIS) the chain is Cytoplasmic. A helical membrane pass occupies residues 58-78 (VLGFVLRLFAVFGTIGSALAM). The Extracellular segment spans residues 79 to 103 (GTTHESVVSLSQLVLLKVKYSDLPT). The helical transmembrane segment at 104–124 (LMFFVVANAIAGGYLVLSLPV) threads the bilayer. Residues 125–138 (SIFHIFSTKAKTSR) lie on the Cytoplasmic side of the membrane. Residues 139-159 (IILLVIDTVMLALVSSGASAA) traverse the membrane as a helical segment. Residues 160–191 (TATVYLAHEGNTTANWPPICQQFDGFCERISG) lie on the Extracellular side of the membrane. Asn-170 carries an N-linked (GlcNAc...) asparagine glycan. The helical transmembrane segment at 192–212 (SLIGSFCAVILLMLIVINSAI) threads the bilayer. Topologically, residues 213–217 (SLSRH) are cytoplasmic.

It belongs to the Casparian strip membrane proteins (CASP) family. In terms of assembly, homodimer and heterodimers.

The protein resides in the cell membrane. Functionally, regulates membrane-cell wall junctions and localized cell wall deposition. Required for establishment of the Casparian strip membrane domain (CSD) and the subsequent formation of Casparian strips, a cell wall modification of the root endodermis that determines an apoplastic barrier between the intraorganismal apoplasm and the extraorganismal apoplasm and prevents lateral diffusion. The chain is Casparian strip membrane protein 6 from Arabidopsis lyrata subsp. lyrata (Lyre-leaved rock-cress).